The chain runs to 190 residues: Peptidyl-tRNA hydrolase (190 aa).

Residue Tyr18 participates in tRNA binding. Residue His23 is the Proton acceptor of the active site. The tRNA site is built by Phe69, Asn71, and Asn117.

The protein belongs to the PTH family. Monomer.

The protein resides in the cytoplasm. It catalyses the reaction an N-acyl-L-alpha-aminoacyl-tRNA + H2O = an N-acyl-L-amino acid + a tRNA + H(+). Its function is as follows. Hydrolyzes ribosome-free peptidyl-tRNAs (with 1 or more amino acids incorporated), which drop off the ribosome during protein synthesis, or as a result of ribosome stalling. Catalyzes the release of premature peptidyl moieties from peptidyl-tRNA molecules trapped in stalled 50S ribosomal subunits, and thus maintains levels of free tRNAs and 50S ribosomes. The polypeptide is Peptidyl-tRNA hydrolase (Rhodococcus jostii (strain RHA1)).